Consider the following 383-residue polypeptide: Glucose-1-phosphate adenylyltransferase (383 aa).

Residues Y99, G164, 179-180 (EK), and S190 each bind alpha-D-glucose 1-phosphate.

This sequence belongs to the bacterial/plant glucose-1-phosphate adenylyltransferase family. Homotetramer.

The catalysed reaction is alpha-D-glucose 1-phosphate + ATP + H(+) = ADP-alpha-D-glucose + diphosphate. The protein operates within glycan biosynthesis; glycogen biosynthesis. Functionally, involved in the biosynthesis of ADP-glucose, a building block required for the elongation reactions to produce glycogen. Catalyzes the reaction between ATP and alpha-D-glucose 1-phosphate (G1P) to produce pyrophosphate and ADP-Glc. This chain is Glucose-1-phosphate adenylyltransferase, found in Halalkalibacterium halodurans (strain ATCC BAA-125 / DSM 18197 / FERM 7344 / JCM 9153 / C-125) (Bacillus halodurans).